A 126-amino-acid polypeptide reads, in one-letter code: uncharacterized protein (126 aa).

Helical transmembrane passes span Leu21–Ser43 and Ser48–Leu70.

The protein localises to the membrane. This is an uncharacterized protein from Saccharomyces cerevisiae (strain ATCC 204508 / S288c) (Baker's yeast).